Here is a 152-residue protein sequence, read N- to C-terminus: MSPHLTALLGLVLCLAQTIHTQEGALPRPSISAEPGTVISPGSHVTFMCRGPVGVQTFRLEREDRAKYKDSYNVFRLGPSESEARFHIDSVSEGNAGLYRCLYYKPPGWSEHSDFLELLVKESSGGPDSPDTEPGSSAGTVPGTEASGFDAP.

A signal peptide spans 1–21; the sequence is MSPHLTALLGLVLCLAQTIHT. Residues 29–117 form the Ig-like C2-type domain; it reads PSISAEPGTV…GWSEHSDFLE (89 aa). C49 and C101 are joined by a disulfide. Residues 120–152 are disordered; it reads VKESSGGPDSPDTEPGSSAGTVPGTEASGFDAP.

It is found in the secreted. The chain is Leukocyte-associated immunoglobulin-like receptor 2 (LAIR2) from Homo sapiens (Human).